Reading from the N-terminus, the 413-residue chain is Scarecrow-like protein 21 (413 aa).

Residues 41-413 (IVEAISRGDL…RILVSSCAWK (373 aa)) enclose the GRAS domain. The segment at 48 to 108 (GDLKLVLVAC…VARLAASGSS (61 aa)) is leucine repeat I (LRI). Positions 127–192 (VYVLHEVCPY…GGAPNIRITG (66 aa)) are VHIID. The VHIID signature appears at 158-162 (IHIID). The leucine repeat II (LRII) stretch occupies residues 201 to 233 (TVKKRLEKLAKKFDVPFRFNAVSRPSCEVEVEN). Residues 242 to 336 (LGVNFAYMLH…QHCMARDVVN (95 aa)) are PFYRE. The SAW stretch occupies residues 339 to 413 (ACEGAERIER…RILVSSCAWK (75 aa)).

Belongs to the GRAS family. As to quaternary structure, interacts with Meloidogyne incognita 16D10. In terms of tissue distribution, expressed in seedlings, roots, cotyledons, leaves and flowers.

The protein resides in the nucleus. Probable transcription factor involved in plant development. The polypeptide is Scarecrow-like protein 21 (SCL21) (Arabidopsis thaliana (Mouse-ear cress)).